The following is a 432-amino-acid chain: Metacaspase-1 (432 aa).

Low complexity-rich tracts occupy residues 1–14 (MYPG…NNAG) and 29–59 (QQYG…SQQY). The segment at 1–70 (MYPGSGRYTY…PPPGPPPMAY (70 aa)) is disordered. Positions 60–70 (APPPGPPPMAY) are enriched in pro residues. Residues His-220 and Cys-276 contribute to the active site.

Belongs to the peptidase C14B family.

The protein localises to the cytoplasm. The protein resides in the nucleus. Its function is as follows. Mediates cell death (apoptosis) triggered by oxygen stress, salt stress or chronological aging. Regulated cell death can prevent a release of toxic cellular components, thus avoiding necrotic collapse of the colony, and can also provide nutrients for healthy cells. Therefore, regulated cell death in yeast colonies can be as important for their development as are apoptosis and related processes that occur within metazoa. The polypeptide is Metacaspase-1 (MCA1) (Saccharomyces cerevisiae (strain YJM789) (Baker's yeast)).